The chain runs to 267 residues: 4-hydroxy-tetrahydrodipicolinate reductase (267 aa).

Residues 8–13 (GAAGRM) and aspartate 34 each bind NAD(+). NADP(+) is bound at residue arginine 35. NAD(+) contacts are provided by residues 98-100 (GTT) and 122-125 (AANF). The Proton donor/acceptor role is filled by histidine 155. Position 156 (histidine 156) interacts with (S)-2,3,4,5-tetrahydrodipicolinate. Residue lysine 159 is the Proton donor of the active site. Residue 165-166 (GT) participates in (S)-2,3,4,5-tetrahydrodipicolinate binding.

This sequence belongs to the DapB family.

It is found in the cytoplasm. The catalysed reaction is (S)-2,3,4,5-tetrahydrodipicolinate + NAD(+) + H2O = (2S,4S)-4-hydroxy-2,3,4,5-tetrahydrodipicolinate + NADH + H(+). It carries out the reaction (S)-2,3,4,5-tetrahydrodipicolinate + NADP(+) + H2O = (2S,4S)-4-hydroxy-2,3,4,5-tetrahydrodipicolinate + NADPH + H(+). The protein operates within amino-acid biosynthesis; L-lysine biosynthesis via DAP pathway; (S)-tetrahydrodipicolinate from L-aspartate: step 4/4. Functionally, catalyzes the conversion of 4-hydroxy-tetrahydrodipicolinate (HTPA) to tetrahydrodipicolinate. In Pseudomonas putida (strain W619), this protein is 4-hydroxy-tetrahydrodipicolinate reductase.